The chain runs to 301 residues: Negative regulator of the PHO system (301 aa).

A Protein kinase domain is found at 7–297 (FKQLERLGNG…AQQALSHPLF (291 aa)). ATP contacts are provided by residues 13–21 (LGNGTYATV) and lysine 36. Catalysis depends on aspartate 133, which acts as the Proton acceptor.

The protein belongs to the protein kinase superfamily. CMGC Ser/Thr protein kinase family. CDC2/CDKX subfamily. In terms of assembly, interacts with a number of cyclins.

It carries out the reaction L-seryl-[protein] + ATP = O-phospho-L-seryl-[protein] + ADP + H(+). The catalysed reaction is L-threonyl-[protein] + ATP = O-phospho-L-threonyl-[protein] + ADP + H(+). Its function is as follows. When phosphate concentrations are high it phosphorylates the PHO4 transcription factor thus establishing repression. The protein is Negative regulator of the PHO system (PHO85) of Eremothecium gossypii (strain ATCC 10895 / CBS 109.51 / FGSC 9923 / NRRL Y-1056) (Yeast).